Here is a 434-residue protein sequence, read N- to C-terminus: Trigger factor (434 aa).

The 86-residue stretch at 160–245 (GDKVKMNFVG…LTEVQAANLP (86 aa)) folds into the PPIase FKBP-type domain.

Belongs to the FKBP-type PPIase family. Tig subfamily.

The protein localises to the cytoplasm. It catalyses the reaction [protein]-peptidylproline (omega=180) = [protein]-peptidylproline (omega=0). In terms of biological role, involved in protein export. Acts as a chaperone by maintaining the newly synthesized protein in an open conformation. Functions as a peptidyl-prolyl cis-trans isomerase. In Shewanella baltica (strain OS185), this protein is Trigger factor.